The chain runs to 217 residues: Thiamine-phosphate synthase (217 aa).

4-amino-2-methyl-5-(diphosphooxymethyl)pyrimidine is bound by residues 41-45 (QYRDK) and Asn-76. The Mg(2+) site is built by Asp-77 and Asp-96. Ser-115 is a 4-amino-2-methyl-5-(diphosphooxymethyl)pyrimidine binding site. 142–144 (SPS) is a 2-[(2R,5Z)-2-carboxy-4-methylthiazol-5(2H)-ylidene]ethyl phosphate binding site. Position 145 (Lys-145) interacts with 4-amino-2-methyl-5-(diphosphooxymethyl)pyrimidine. Residues Gly-172 and 192-193 (IS) each bind 2-[(2R,5Z)-2-carboxy-4-methylthiazol-5(2H)-ylidene]ethyl phosphate.

This sequence belongs to the thiamine-phosphate synthase family. It depends on Mg(2+) as a cofactor.

The enzyme catalyses 2-[(2R,5Z)-2-carboxy-4-methylthiazol-5(2H)-ylidene]ethyl phosphate + 4-amino-2-methyl-5-(diphosphooxymethyl)pyrimidine + 2 H(+) = thiamine phosphate + CO2 + diphosphate. The catalysed reaction is 2-(2-carboxy-4-methylthiazol-5-yl)ethyl phosphate + 4-amino-2-methyl-5-(diphosphooxymethyl)pyrimidine + 2 H(+) = thiamine phosphate + CO2 + diphosphate. It catalyses the reaction 4-methyl-5-(2-phosphooxyethyl)-thiazole + 4-amino-2-methyl-5-(diphosphooxymethyl)pyrimidine + H(+) = thiamine phosphate + diphosphate. The protein operates within cofactor biosynthesis; thiamine diphosphate biosynthesis; thiamine phosphate from 4-amino-2-methyl-5-diphosphomethylpyrimidine and 4-methyl-5-(2-phosphoethyl)-thiazole: step 1/1. Functionally, condenses 4-methyl-5-(beta-hydroxyethyl)thiazole monophosphate (THZ-P) and 2-methyl-4-amino-5-hydroxymethyl pyrimidine pyrophosphate (HMP-PP) to form thiamine monophosphate (TMP). This chain is Thiamine-phosphate synthase, found in Acidithiobacillus ferrooxidans (strain ATCC 23270 / DSM 14882 / CIP 104768 / NCIMB 8455) (Ferrobacillus ferrooxidans (strain ATCC 23270)).